A 361-amino-acid polypeptide reads, in one-letter code: MNDSRWTEWRILNTSSGILNVSERHSCPLGFGHYSAVDVCIFETIVIVLLTFLIIAGNLTVIFVFHCAPLLHHYTTSYFIQTMAYADLFVGVSCLVPTLSLLHYSTGIHESLTCQVFGYIISVLKSVSMACLACISVDRYLAITKPLSYNQLVTPCRLRICIILIWIYSCLIFLPSFFGWGKPGYHGDIFEWCATSWLTSAYFTGFIVCLLYAPAALVVCFTYFHIFKICRQHTKEINDRRARFPSHEAAASRDAGHSPDRRYAMVLFRITSVFYMLWLPYIIYFLLESSRVLDNPTLSFLTTWLAISNSFCNCVIYSLSNSVFRLGLRRLSETMCTSCMCVKDKEARDPKPRKRANSCSI.

Topologically, residues 1–44 are extracellular; it reads MNDSRWTEWRILNTSSGILNVSERHSCPLGFGHYSAVDVCIFET. N-linked (GlcNAc...) asparagine glycosylation is found at Asn2, Asn13, and Asn20. The helical transmembrane segment at 45–65 threads the bilayer; that stretch reads IVIVLLTFLIIAGNLTVIFVF. The Cytoplasmic segment spans residues 66 to 87; sequence HCAPLLHHYTTSYFIQTMAYAD. A helical membrane pass occupies residues 88-108; sequence LFVGVSCLVPTLSLLHYSTGI. Residues 109-115 are Extracellular-facing; the sequence is HESLTCQ. Residues Cys114 and Cys193 are joined by a disulfide bond. Residues 116–136 form a helical membrane-spanning segment; it reads VFGYIISVLKSVSMACLACIS. The Cytoplasmic segment spans residues 137-159; that stretch reads VDRYLAITKPLSYNQLVTPCRLR. The chain crosses the membrane as a helical span at residues 160–180; it reads ICIILIWIYSCLIFLPSFFGW. Topologically, residues 181 to 200 are extracellular; that stretch reads GKPGYHGDIFEWCATSWLTS. The chain crosses the membrane as a helical span at residues 201–221; the sequence is AYFTGFIVCLLYAPAALVVCF. The Cytoplasmic portion of the chain corresponds to 222–265; that stretch reads TYFHIFKICRQHTKEINDRRARFPSHEAAASRDAGHSPDRRYAM. A helical membrane pass occupies residues 266-286; it reads VLFRITSVFYMLWLPYIIYFL. The Extracellular portion of the chain corresponds to 287–296; it reads LESSRVLDNP. A helical transmembrane segment spans residues 297 to 317; sequence TLSFLTTWLAISNSFCNCVIY. Residues 318-361 lie on the Cytoplasmic side of the membrane; sequence SLSNSVFRLGLRRLSETMCTSCMCVKDKEARDPKPRKRANSCSI.

The protein belongs to the G-protein coupled receptor 1 family.

Its subcellular location is the cell membrane. G- protein coupled receptor activated by antipsychotics reserpine leading to an increase in intracellular cAMP and its internalization. May play a role in locomotor activity through modulation of dopamine, NMDA and ADORA2A-induced locomotor activity. These behavioral changes are accompanied by modulation of the dopamine receptor signaling pathway in striatum. Modulates HTT level via cAMP-dependent but PKA independent mechanisms throught activation of RAB39B that translocates HTT to the endoplasmic reticulum, thus avoiding proteasome degradation. The sequence is that of G-protein coupled receptor 52 from Bos taurus (Bovine).